The sequence spans 98 residues: Large ribosomal subunit protein mL53 (98 aa).

The protein belongs to the mitochondrion-specific ribosomal protein mL53 family. Component of the mitochondrial large ribosomal subunit (mt-LSU). Mature yeast 74S mitochondrial ribosomes consist of a small (37S) and a large (54S) subunit. The 37S small subunit contains a 15S ribosomal RNA (15S mt-rRNA) and 34 different proteins. The 54S large subunit contains a 21S rRNA (21S mt-rRNA) and 46 different proteins.

It localises to the mitochondrion. Component of the mitochondrial ribosome (mitoribosome), a dedicated translation machinery responsible for the synthesis of mitochondrial genome-encoded proteins, including at least some of the essential transmembrane subunits of the mitochondrial respiratory chain. The mitoribosomes are attached to the mitochondrial inner membrane and translation products are cotranslationally integrated into the membrane. In Saccharomyces cerevisiae (strain ATCC 204508 / S288c) (Baker's yeast), this protein is Large ribosomal subunit protein mL53 (MRPL44).